The primary structure comprises 194 residues: SRP-independent targeting protein 3 homolog (194 aa).

The next 2 membrane-spanning stretches (helical) occupy residues 43–63 (ILYA…KIII) and 110–130 (LVTI…PPLL).

The protein belongs to the PHO88 family.

It is found in the endoplasmic reticulum membrane. May function in a SRP (signal recognition particle) and GET (guided entry of tail-anchored proteins) independent pathway for targeting a broad range of substrate proteins to the endoplasmic reticulum. Involved in inorganic phosphate uptake. Also involved in telomere length regulation and maintenance. This is SRP-independent targeting protein 3 homolog from Schizosaccharomyces pombe (strain 972 / ATCC 24843) (Fission yeast).